Here is a 151-residue protein sequence, read N- to C-terminus: Epigen (151 aa).

The first 18 residues, 1-18 (MAFGMLIYILLKAMGALS), serve as a signal peptide directing secretion. At 19–108 (EEAALTASSL…NSYAHNSYER (90 aa)) the chain is on the extracellular side. Asn-39 is a glycosylation site (N-linked (GlcNAc...) asparagine). An EGF-like domain is found at 54 to 94 (LMQTCLEEHHSYCINGLCAFHSELRKPICKCLAGYNGERCE). 3 disulfide bridges follow: Cys-58/Cys-71, Cys-66/Cys-82, and Cys-84/Cys-93. A helical transmembrane segment spans residues 109–129 (YIAVGIGIGILTSGILAIIYC). Topologically, residues 130-151 (YVRKRCRKLKSPYKVCMGETAL) are cytoplasmic.

The protein resides in the membrane. Functionally, promotes the growth of epithelial cells. In Gallus gallus (Chicken), this protein is Epigen (EPGN).